We begin with the raw amino-acid sequence, 188 residues long: Large ribosomal subunit protein uL22 (188 aa).

Residues 155–188 form a disordered region; the sequence is STPEGAKKGKKKKGTKDAVEKSSKRVKTAATAAH.

The protein belongs to the universal ribosomal protein uL22 family.

In Agriotes lineatus (Lined click beetle), this protein is Large ribosomal subunit protein uL22 (RpL17).